The sequence spans 439 residues: Gnt-II system L-idonate transporter (439 aa).

Topologically, residues 1–11 (MPLIIIAAGVA) are periplasmic. Residues 12–34 (LLLILMIGFKVNGFIALVLVAAV) traverse the membrane as a helical segment. The Cytoplasmic segment spans residues 35–53 (VGFAEGMDAQAVLHSIQNG). A helical transmembrane segment spans residues 54–76 (IGSTLGGLAMILGFGAMLGKLIS). The Periplasmic portion of the chain corresponds to 77–96 (DTGAAQRIATTLIATFGKKR). The helical transmembrane segment at 97–114 (VQWALVITGLVVGLAMFF) threads the bilayer. At 115-118 (EVGF) the chain is on the cytoplasmic side. A helical membrane pass occupies residues 119–141 (VLLLPLVFTIVASSGLPLLYVGV). At 142-170 (PMVAALSVTHCFLPPHPGPTAIATIFEAN) the chain is on the periplasmic side. The helical transmembrane segment at 171-193 (LGTTLLYGFIITIPTVIVAGPLF) threads the bilayer. Residues 194 to 218 (SKLLTRFEKAPPEGLFNPHLFSEEE) are Cytoplasmic-facing. A helical transmembrane segment spans residues 219–241 (MPSFWNSIFAAVIPVILMAIAAV). The Periplasmic segment spans residues 242–253 (CEITLPKTNTVR). A helical membrane pass occupies residues 254–276 (LFFEFVGNPAVALFIAIVIAIFT). Topologically, residues 277–290 (LGRRNGRTIEQIMD) are cytoplasmic. The chain crosses the membrane as a helical span at residues 291–310 (IIGDSIGAIAMIVFIIAGGG). Over 311 to 322 (AFKQVLVDSGVG) the chain is Periplasmic. The chain crosses the membrane as a helical span at residues 323–345 (HYISHLMTGTTLSPLLMCWTVAA). Residues 346 to 348 (LLR) are Cytoplasmic-facing. Residues 349–371 (IALGSATVAAITTAGVVLPIINV) traverse the membrane as a helical segment. Topologically, residues 372-377 (THADPA) are periplasmic. The chain crosses the membrane as a helical span at residues 378–400 (LMVLATGAGSVIASHVNDPGFWL). Residues 401–414 (FKGYFNLTVGETLR) lie on the Cytoplasmic side of the membrane. A helical membrane pass occupies residues 415–437 (TWTVMETLISIMGLLGVLAINAV). At 438-439 (LH) the chain is on the periplasmic side.

The protein belongs to the GntP permease family.

Its subcellular location is the cell inner membrane. The catalysed reaction is L-idonate(in) + H(+)(in) = L-idonate(out) + H(+)(out). It catalyses the reaction D-gluconate(in) + H(+)(in) = D-gluconate(out) + H(+)(out). The enzyme catalyses 5-dehydro-D-gluconate(in) + H(+)(in) = 5-dehydro-D-gluconate(out) + H(+)(out). It participates in carbohydrate acid metabolism; L-idonate degradation. In terms of biological role, transporter which is probably involved in L-idonate metabolism. Transports L-idonate from the periplasm across the inner membrane. Can also transport D-gluconate and 5-keto-D-gluconate. It has been reported that gluconate uptake probably occurs via a proton-symport mechanism in E.coli. This Escherichia coli (strain K12) protein is Gnt-II system L-idonate transporter.